Here is a 294-residue protein sequence, read N- to C-terminus: 33 kDa chaperonin (294 aa).

Intrachain disulfides connect Cys-231–Cys-233 and Cys-264–Cys-267.

It belongs to the HSP33 family. In terms of processing, under oxidizing conditions two disulfide bonds are formed involving the reactive cysteines. Under reducing conditions zinc is bound to the reactive cysteines and the protein is inactive.

The protein localises to the cytoplasm. Its function is as follows. Redox regulated molecular chaperone. Protects both thermally unfolding and oxidatively damaged proteins from irreversible aggregation. Plays an important role in the bacterial defense system toward oxidative stress. The sequence is that of 33 kDa chaperonin from Aeromonas salmonicida (strain A449).